A 600-amino-acid chain; its full sequence is UvrABC system protein C (600 aa).

Residues 15–92 (EKPGCYLMKD…IKKYQPYYNV (78 aa)) form the GIY-YIG domain. The UVR domain occupies 197 to 232 (TSVKQDLTTKMEKASENLEFERAAEIRDQLKYIEET).

The protein belongs to the UvrC family. In terms of assembly, interacts with UvrB in an incision complex.

It is found in the cytoplasm. In terms of biological role, the UvrABC repair system catalyzes the recognition and processing of DNA lesions. UvrC both incises the 5' and 3' sides of the lesion. The N-terminal half is responsible for the 3' incision and the C-terminal half is responsible for the 5' incision. This is UvrABC system protein C from Lactobacillus acidophilus (strain ATCC 700396 / NCK56 / N2 / NCFM).